We begin with the raw amino-acid sequence, 498 residues long: ATP synthase subunit beta, chloroplastic (498 aa).

Glycine 172 to threonine 179 is an ATP binding site.

The protein belongs to the ATPase alpha/beta chains family. In terms of assembly, F-type ATPases have 2 components, CF(1) - the catalytic core - and CF(0) - the membrane proton channel. CF(1) has five subunits: alpha(3), beta(3), gamma(1), delta(1), epsilon(1). CF(0) has four main subunits: a(1), b(1), b'(1) and c(9-12).

The protein resides in the plastid. Its subcellular location is the chloroplast thylakoid membrane. The enzyme catalyses ATP + H2O + 4 H(+)(in) = ADP + phosphate + 5 H(+)(out). Its function is as follows. Produces ATP from ADP in the presence of a proton gradient across the membrane. The catalytic sites are hosted primarily by the beta subunits. This is ATP synthase subunit beta, chloroplastic from Agrostis stolonifera (Creeping bentgrass).